The chain runs to 436 residues: Glutamate-1-semialdehyde 2,1-aminomutase (436 aa).

The residue at position 272 (Lys272) is an N6-(pyridoxal phosphate)lysine.

Belongs to the class-III pyridoxal-phosphate-dependent aminotransferase family. HemL subfamily. In terms of assembly, homodimer. Pyridoxal 5'-phosphate serves as cofactor.

The protein localises to the cytoplasm. It carries out the reaction (S)-4-amino-5-oxopentanoate = 5-aminolevulinate. The protein operates within porphyrin-containing compound metabolism; protoporphyrin-IX biosynthesis; 5-aminolevulinate from L-glutamyl-tRNA(Glu): step 2/2. Its pathway is porphyrin-containing compound metabolism; chlorophyll biosynthesis. The sequence is that of Glutamate-1-semialdehyde 2,1-aminomutase from Methylibium petroleiphilum (strain ATCC BAA-1232 / LMG 22953 / PM1).